We begin with the raw amino-acid sequence, 120 residues long: Large ribosomal subunit protein bL12 (120 aa).

The protein belongs to the bacterial ribosomal protein bL12 family. As to quaternary structure, homodimer. Part of the ribosomal stalk of the 50S ribosomal subunit. Forms a multimeric L10(L12)X complex, where L10 forms an elongated spine to which 2 to 4 L12 dimers bind in a sequential fashion. Binds GTP-bound translation factors.

Its function is as follows. Forms part of the ribosomal stalk which helps the ribosome interact with GTP-bound translation factors. Is thus essential for accurate translation. In Brevibacillus brevis (strain 47 / JCM 6285 / NBRC 100599), this protein is Large ribosomal subunit protein bL12.